The sequence spans 227 residues: N-(5'-phosphoribosyl)anthranilate isomerase (227 aa).

Belongs to the TrpF family.

The catalysed reaction is N-(5-phospho-beta-D-ribosyl)anthranilate = 1-(2-carboxyphenylamino)-1-deoxy-D-ribulose 5-phosphate. It functions in the pathway amino-acid biosynthesis; L-tryptophan biosynthesis; L-tryptophan from chorismate: step 3/5. The chain is N-(5'-phosphoribosyl)anthranilate isomerase from Herminiimonas arsenicoxydans.